The primary structure comprises 442 residues: MMEESGIETTPPSTPPPSTIGTSVPAATTAISTPVPPIFSSPLAAPVFSPLPSFAQPIFSTPLPSSVPPLRTSVPLTYAPPLPVTGVHSPPAHTSVPAAFSSPLPAFSSPPSFPPPPLNTTPGPVLTAPPTGPPVGGFSMSSHYDITKGHAGRAPQTPLMPTYSAAPVTVLPNPVIQAPLAGSGSSITFPEEPEDSRVHTMHVDGSAGGIWGFFKGVAGNPMVKSVLDKTKHSMETVITTLDPGMASYIRTGGEMDIVVTSVKEVKVAAVREAFQEVFGMAVVTGEDGQSNIAPQPVGYAAGLKGAQERIDSLRRSGMIHEKQPAVSVENFIAELLPDKWFDIGCVIIDDPTHGIRLETFTQATPVPLEYVQQAQNLTPQDYNLRWSGLSVTVGEVLERSLAHVCRTDWHVAFTGMSRRQMIYSAAKALAGMYKQRLPPRIL.

Residues 1-27 (MMEESGIETTPPSTPPPSTIGTSVPAA) are disordered.

It belongs to the PRRC1 family.

The protein resides in the golgi apparatus. In Xenopus laevis (African clawed frog), this protein is Protein PRRC1-A (prrc1-a).